The primary structure comprises 393 residues: Sister chromatid cohesion protein DCC1 (393 aa).

Belongs to the DCC1 family. In terms of assembly, component of the CTF18-RFC complex which consists of CTF8, CTF18, DSCC1 and the RFC complex. Interacts with CTF8 and CTF18. Interacts with DDX11.

The protein localises to the nucleus. Loads PCNA onto primed templates regulating velocity, spacing and restart activity of replication forks. May couple DNA replication to sister chromatid cohesion through regulation of the acetylation of the cohesin subunit SMC3. The polypeptide is Sister chromatid cohesion protein DCC1 (DSCC1) (Homo sapiens (Human)).